A 391-amino-acid chain; its full sequence is B2 bradykinin receptor (391 aa).

The Extracellular segment spans residues 1–60; the sequence is MFSPWKISMFLSVREDSVPTTASFSADMLNVTLQGPTLNGTFAQSKCPQVEWLGWLNTIQ. N-linked (GlcNAc...) asparagine glycosylation is found at Asn-30 and Asn-39. A helical membrane pass occupies residues 61-84; sequence PPFLWVLFVLATLENIFVLSVFCL. At 85 to 93 the chain is on the cytoplasmic side; it reads HKSSCTVAE. A helical membrane pass occupies residues 94–118; it reads IYLGNLAAADLILACGLPFWAITIS. The Extracellular portion of the chain corresponds to 119-131; it reads NNFDWLFGETLCR. Cys-130 and Cys-211 are joined by a disulfide. A helical membrane pass occupies residues 132-153; it reads VVNAIISMNLYSSICFLMLVSI. Residues 154-175 lie on the Cytoplasmic side of the membrane; it reads DRYLALVKTMSMGRMRGVRWAK. Tyr-156 carries the post-translational modification Phosphotyrosine. A helical transmembrane segment spans residues 176-198; the sequence is LYSLVIWGCTLLLSSPMLVFRTM. At 199 to 221 the chain is on the extracellular side; the sequence is KEYSDEGHNVTACVISYPSLIWE. Asn-207 is a glycosylation site (N-linked (GlcNAc...) asparagine). The helical transmembrane segment at 222-248 threads the bilayer; sequence VFTNMLLNVVGFLLPLSVITFCTMQIM. At 249 to 267 the chain is on the cytoplasmic side; sequence QVLRNNEMQKFKEIQTERR. The helical transmembrane segment at 268–292 threads the bilayer; it reads ATVLVLVVLLLFIICWLPFQISTFL. At 293 to 311 the chain is on the extracellular side; the sequence is DTLHRLGILSSCQDERIID. The helical transmembrane segment at 312 to 335 threads the bilayer; the sequence is VITQIASFMAYSNSCLNPLVYVIV. The Cytoplasmic portion of the chain corresponds to 336–391; that stretch reads GKRFRKKSWEVYQGVCQKGGCRSEPIQMENSMGTLRTSISVERQIHKLQDWAGSRQ. Tyr-347 is modified (phosphotyrosine). The S-palmitoyl cysteine moiety is linked to residue Cys-351. Ser-366 carries the phosphoserine modification. The residue at position 369 (Thr-369) is a Phosphothreonine. Phosphoserine; by GRK6 is present on residues Ser-373 and Ser-375.

This sequence belongs to the G-protein coupled receptor 1 family. Bradykinin receptor subfamily. BDKRB2 sub-subfamily. Forms a complex with PECAM1 and GNAQ. Interacts with PECAM1. As to expression, ubiquitous. Widespread in normal smooth muscle tissue and neurons.

The protein resides in the cell membrane. Functionally, receptor for bradykinin. It is associated with G proteins that activate a phosphatidylinositol-calcium second messenger system. The sequence is that of B2 bradykinin receptor (BDKRB2) from Homo sapiens (Human).